The chain runs to 740 residues: Homeobox protein 4 (740 aa).

Polar residues predominate over residues 1–13 (MNTVEENNTKITD). Disordered regions lie at residues 1-41 (MNTV…ENLS) and 179-491 (NNNN…NNEI). Low complexity-rich tracts occupy residues 14–34 (NNNNNNNNNNNNNNNNNNNKN), 179–241 (NNNN…PQQN), 251–288 (NNNNINNNNINKNNNNYNNNNNNKNNNNNNNNNNNNNN), and 303–316 (STTDNTSSVSSVPS). A coiled-coil region spans residues 254–287 (NINNNNINKNNNNYNNNNNNKNNNNNNNNNNNNN). Positions 317 to 328 (NKKKSSKTKQKS) are enriched in basic residues. The segment covering 339 to 363 (HKSNYHQQPNQNSQHLQSKPNSPIL) has biased composition (polar residues). 2 stretches are compositionally biased toward low complexity: residues 365–390 (SSPLNSQQNSSPPQPSPTQSFLSPPQ) and 397–491 (NNNF…NNEI). A coiled-coil region spans residues 472–500 (NTNTNNNNNKNNNNNNNNEIENNNNEELI). The homeobox DNA-binding region spans 605 to 667 (RPKKGAKLSK…NTRRRKVPTL (63 aa)). Over residues 686 to 722 (NNNNNNGGNSNFKNNNNNTITTTSTSNNNNNNNNNNH) the composition is skewed to low complexity. The tract at residues 686-740 (NNNNNNGGNSNFKNNNNNTITTTSTSNNNNNNNNNNHNEMECDDGENEESSEYDD) is disordered. The segment covering 726–740 (ECDDGENEESSEYDD) has biased composition (acidic residues).

It is found in the nucleus. Functionally, putative transcription factor. The sequence is that of Homeobox protein 4 (hbx4) from Dictyostelium discoideum (Social amoeba).